Consider the following 381-residue polypeptide: Alkanesulfonate monooxygenase (381 aa).

This sequence belongs to the SsuD family. In terms of assembly, homotetramer.

The enzyme catalyses an alkanesulfonate + FMNH2 + O2 = an aldehyde + FMN + sulfite + H2O + 2 H(+). Catalyzes the desulfonation of aliphatic sulfonates. The chain is Alkanesulfonate monooxygenase from Escherichia coli O9:H4 (strain HS).